The chain runs to 1702 residues: MILDTDYITKDGKPIIRIFKKENGEFKIELDPHFQPYIYALLKDDSAIEEIKAIKGERHGKTVRVLDAVKVRKKFLGREVEVWKLIFEHPQDVPAMRGKIREHPAVVDIYEYDIPFAKRYLIDKGLIPMEGDEELKLLAFDIETFYHEGDEFGKGEIIMISYADEEEARVITWKNIDLPYVDVVSNEREMIKRFVQVVKEKDPDVIITYNGDNFDLPYLIKRAEKLGVRLVLGRDKEHPEPKIQRMGDSFAVEIKGRIHFDLFPVVRRTINLPTYTLEAVYEAVLGKTKSKLGAEEIAAIWETEESMKKLAQYSMEDARATYELGKEFFPMEAELAKLIGQSVWDVSRSSTGNLVEWYLLRVAYARNELAPNKPDEEEYKRRLRTTYLGGYVKEPEKGLWENIIYLDFRSLYPSIIVTHNVSPDTLEKEGCKNYDVAPIVGYRFCKDFPGFIPSILGDLIAMRQDIKKKMKSTIDPIEKKMLDYRQRAIKLLANSILPNEWLPIIENGEIKFVKIGEFINSYMEKQKENVKTVENTEVLEVNNLFAFSFNKKIKESEVKKVKALIRHKYKGKAYEIQLSSGRKINITAGHSLFTVRNGEIKEVSGDGIKEGDLIVAPKKIKLNEKGVSINIPELISDLSEEETADIVMTISAKGRKNFFKGMLRTLRWMFGEENRRIRTFNRYLFHLEKLGLIKLLPRGYEVTDWERLKKYKQLYEKLAGSVKYNGNKREYLVMFNEIKDFISYFPQKELEEWKIGTLNGFRTNCILKVDEDFGKLLGYYVSEGYAGAQKNKTGGISYSVKLYNEDPNVLESMKNVAEKFFGKVRVDRNCVSISKKMAYLVMKCLCGALAENKRIPSVILTSPEPVRWSFLEAYFTGDGDIHPSKRFRLSTKSELLANQLVFLLNSLGISSVKIGFDSGVYRVYINEDLQFPQTSREKNTYYSNLIPKEILRDVFGKEFQKNMTFKKFKELVDSGKLNREKAKLLEFFINGDIVLDRVKSVKEKDYEGYVYDLSVEDNENFLVGFGLLYAHNSYYGYMGYPKARWYSKECAESVTAWGRHYIEMTIREIEEKFGFKVLYADSVSGESEIIIRQNGKIRFVKIKDLFSKVDYSIGEKEYCILEGVEALTLDDDGKLVWKPVPYVMRHRANKRMFRIWLTNSWYIDVTEDHSLIGYLNTSKTKTAKKIGERLKEVKPFELGKAVKSLICPNAPLKDENTKTSEIAVKFWELVGLIVGDGNWGGDSRWAEYYLGLSTGKDAEEIKQKLLEPLKTYGVISNYYPKNEKGDFNILAKSLVKFMKRHFKDEKGRRKIPEFMYELPVTYIEAFLRGLFSADGTVTIRKGVPEIRLTNIDADFLREVRKLLWIVGISNSIFAETTPNRYNGVSTGTYSKHLRIKNKWRFAERIGFLIERKQKRLLEHLKSARVKRNTIDFGFDLVHVKKVEEIPYEGYVYDIEVEETHRFFANNILVHNTDGFYATIPGEKPELIKKKAKEFLNYINSKLPGLLELEYEGFYLRGFFVTKKRYAVIDEEGRITTRGLEVVRRDWSEIAKETQAKVLEAILKEGSVEKAVEVVRDVVEKIAKYRVPLEKLVIHEQITRDLKDYKAIGPHVAIAKRLAARGIKVKPGTIISYIVLKGSGKISDRVILLTEYDPRKHKYDPDYYIENQVLPAVLRILEAFGYRKEDLRYQSSKQTGLDAWLKR.

DOD-type homing endonuclease domains are found at residues 776–909 (LLGY…SLGI) and 1229–1368 (LVGL…IVGI).

This sequence belongs to the DNA polymerase type-B family. In terms of processing, this protein undergoes a protein self splicing that involves a post-translational excision of the two intervening regions (inteins) followed by peptide ligation.

It carries out the reaction DNA(n) + a 2'-deoxyribonucleoside 5'-triphosphate = DNA(n+1) + diphosphate. In addition to polymerase activity, this DNA polymerase exhibits 3' to 5' exonuclease activity. Functionally, intein encoded endonucleases are thought to mediate intein mobility by site-specific recombination initiated by endonuclease cleavage at the 'homing site' in gene that lack the intein. The protein is DNA polymerase (pol) of Thermococcus litoralis.